We begin with the raw amino-acid sequence, 159 residues long: Transcription elongation factor GreA (159 aa).

Residues 14 to 76 adopt a coiled-coil conformation; the sequence is VKKLEEELEY…QLENMLRNAN (63 aa).

Belongs to the GreA/GreB family.

In terms of biological role, necessary for efficient RNA polymerase transcription elongation past template-encoded arresting sites. The arresting sites in DNA have the property of trapping a certain fraction of elongating RNA polymerases that pass through, resulting in locked ternary complexes. Cleavage of the nascent transcript by cleavage factors such as GreA or GreB allows the resumption of elongation from the new 3'terminus. GreA releases sequences of 2 to 3 nucleotides. This is Transcription elongation factor GreA from Clostridium novyi (strain NT).